Consider the following 151-residue polypeptide: Ribosome maturation factor RimP (151 aa).

This sequence belongs to the RimP family.

The protein localises to the cytoplasm. Functionally, required for maturation of 30S ribosomal subunits. This chain is Ribosome maturation factor RimP, found in Vibrio vulnificus (strain CMCP6).